A 375-amino-acid polypeptide reads, in one-letter code: 23S rRNA (uracil(747)-C(5))-methyltransferase RlmC (375 aa).

4 residues coordinate [4Fe-4S] cluster: cysteine 3, cysteine 11, cysteine 14, and cysteine 87. Residues glutamine 212, phenylalanine 241, glutamate 262, and asparagine 307 each contribute to the S-adenosyl-L-methionine site. The active-site Nucleophile is the cysteine 334.

It belongs to the class I-like SAM-binding methyltransferase superfamily. RNA M5U methyltransferase family. RlmC subfamily.

The enzyme catalyses uridine(747) in 23S rRNA + S-adenosyl-L-methionine = 5-methyluridine(747) in 23S rRNA + S-adenosyl-L-homocysteine + H(+). Catalyzes the formation of 5-methyl-uridine at position 747 (m5U747) in 23S rRNA. This Escherichia coli O45:K1 (strain S88 / ExPEC) protein is 23S rRNA (uracil(747)-C(5))-methyltransferase RlmC.